Consider the following 124-residue polypeptide: Small ribosomal subunit protein bS6 (124 aa).

A disordered region spans residues isoleucine 101–alanine 124. Positions glutamate 105 to alanine 115 are enriched in basic and acidic residues.

This sequence belongs to the bacterial ribosomal protein bS6 family.

Its function is as follows. Binds together with bS18 to 16S ribosomal RNA. This chain is Small ribosomal subunit protein bS6, found in Polynucleobacter asymbioticus (strain DSM 18221 / CIP 109841 / QLW-P1DMWA-1) (Polynucleobacter necessarius subsp. asymbioticus).